Here is a 418-residue protein sequence, read N- to C-terminus: Tyrosine--tRNA ligase (418 aa).

Residue Tyr-39 coordinates L-tyrosine. The 'HIGH' region motif lies at 44-53 (CTADSLHVGS). L-tyrosine is bound by residues Tyr-176 and Gln-180. Positions 236 to 240 (KMGKT) match the 'KMSKS' region motif. Lys-239 lines the ATP pocket. Residues 350 to 416 (LPLAEMMRAT…KKRHALIRVL (67 aa)) enclose the S4 RNA-binding domain.

It belongs to the class-I aminoacyl-tRNA synthetase family. TyrS type 1 subfamily. As to quaternary structure, homodimer.

The protein localises to the cytoplasm. It carries out the reaction tRNA(Tyr) + L-tyrosine + ATP = L-tyrosyl-tRNA(Tyr) + AMP + diphosphate + H(+). In terms of biological role, catalyzes the attachment of tyrosine to tRNA(Tyr) in a two-step reaction: tyrosine is first activated by ATP to form Tyr-AMP and then transferred to the acceptor end of tRNA(Tyr). The polypeptide is Tyrosine--tRNA ligase (Rhodospirillum rubrum (strain ATCC 11170 / ATH 1.1.1 / DSM 467 / LMG 4362 / NCIMB 8255 / S1)).